The sequence spans 91 residues: Small ribosomal subunit protein bS16 (91 aa).

The protein belongs to the bacterial ribosomal protein bS16 family.

This chain is Small ribosomal subunit protein bS16, found in Staphylococcus aureus (strain Mu3 / ATCC 700698).